The following is a 477-amino-acid chain: Enolase 1, chloroplastic (477 aa).

Residues 1–41 constitute a chloroplast transit peptide; that stretch reads MALTTKPHHLQRSFLSPSRVSGERYLESAPSCLRFRRSGVQ. The substrate site is built by His203 and Glu212. The active-site Proton donor is the Glu255. Mg(2+)-binding residues include Asp290, Glu340, and Asp365. Positions 340 and 365 each coordinate substrate. Lys390 functions as the Proton acceptor in the catalytic mechanism. Substrate is bound by residues 417-420 and Lys441; that span reads SHRS. Ser476 is subject to Phosphoserine.

Belongs to the enolase family. It depends on Mg(2+) as a cofactor. In terms of tissue distribution, highly expressed in young roots, young siliques, and shoot apex. Lowly expressed in young leaves, stems and cotyledons.

It is found in the plastid. Its subcellular location is the chloroplast. The catalysed reaction is (2R)-2-phosphoglycerate = phosphoenolpyruvate + H2O. The protein operates within carbohydrate degradation; glycolysis; pyruvate from D-glyceraldehyde 3-phosphate: step 4/5. This is Enolase 1, chloroplastic (ENO1) from Arabidopsis thaliana (Mouse-ear cress).